The sequence spans 354 residues: LAS seventeen-binding protein 5 (354 aa).

One can recognise a VHS domain in the interval 15-161; that stretch reads TIFRIVSSRD…LGQTVKQRYS (147 aa). 2 disordered regions span residues 160–184 and 296–354; these read YSKS…DDSA and SAQD…HNKI. Residues 296–310 are compositionally biased toward basic and acidic residues; the sequence is SAQDDSSDESDHGSY.

Belongs to the LSB5 family. Interacts with SLA1 and LAS17.

It is found in the cytoplasm. Its subcellular location is the cell cortex. It localises to the cytoskeleton. Its function is as follows. Essential for the organization of the actin cytoskeleton, fluid phase endocytosis and vesicle trafficking, together with YSC84. This chain is LAS seventeen-binding protein 5 (LSB5), found in Saccharomyces cerevisiae (strain ATCC 204508 / S288c) (Baker's yeast).